The following is a 138-amino-acid chain: Superoxide dismutase [Mn] (138 aa).

Mn(2+) is bound by residues H1, H49, D133, and H137.

This sequence belongs to the iron/manganese superoxide dismutase family. Mn(2+) serves as cofactor.

It carries out the reaction 2 superoxide + 2 H(+) = H2O2 + O2. Functionally, destroys superoxide anion radicals which are normally produced within the cells and which are toxic to biological systems. This Mycobacterium malmoense protein is Superoxide dismutase [Mn] (sodA).